The following is a 684-amino-acid chain: UvrABC system protein C (684 aa).

The GIY-YIG domain occupies 16-95 (TDPGVYKFRD…IKRFDPRFNV (80 aa)). The UVR domain maps to 208 to 243 (APVRKRVTQRMEEAAENLEFELAARLRDDLGAIDKL). Residues 332–352 (EAAEDAKLERRGVDQESHAEP) are compositionally biased toward basic and acidic residues. The disordered stretch occupies residues 332 to 357 (EAAEDAKLERRGVDQESHAEPRQGNA).

The protein belongs to the UvrC family. As to quaternary structure, interacts with UvrB in an incision complex.

Its subcellular location is the cytoplasm. The UvrABC repair system catalyzes the recognition and processing of DNA lesions. UvrC both incises the 5' and 3' sides of the lesion. The N-terminal half is responsible for the 3' incision and the C-terminal half is responsible for the 5' incision. This Corynebacterium aurimucosum (strain ATCC 700975 / DSM 44827 / CIP 107346 / CN-1) (Corynebacterium nigricans) protein is UvrABC system protein C.